The sequence spans 802 residues: Bifunctional purine biosynthetic protein ADE5,7 (802 aa).

The tract at residues 1–450 is GARS; it reads MLNILVLGNG…QNSESSKVAI (450 aa). Positions 114-330 constitute an ATP-grasp domain; the sequence is KRFMSKHNIP…LAQVFLAAAE (217 aa). 141–203 provides a ligand contact to ATP; the sequence is QAHTDKAFVI…EQFLEGDEIS (63 aa). The Mg(2+) site is built by E298 and N300. The segment at 451–802 is AIRS; that stretch reads TYADSGVSVD…CVIENGTKLY (352 aa). Phosphoserine occurs at positions 455 and 458.

It in the N-terminal section; belongs to the GARS family. This sequence in the C-terminal section; belongs to the AIR synthase family. Mg(2+) serves as cofactor. Mn(2+) is required as a cofactor.

Its subcellular location is the cytoplasm. The catalysed reaction is 5-phospho-beta-D-ribosylamine + glycine + ATP = N(1)-(5-phospho-beta-D-ribosyl)glycinamide + ADP + phosphate + H(+). The enzyme catalyses 2-formamido-N(1)-(5-O-phospho-beta-D-ribosyl)acetamidine + ATP = 5-amino-1-(5-phospho-beta-D-ribosyl)imidazole + ADP + phosphate + H(+). Its pathway is purine metabolism; IMP biosynthesis via de novo pathway; 5-amino-1-(5-phospho-D-ribosyl)imidazole from N(2)-formyl-N(1)-(5-phospho-D-ribosyl)glycinamide: step 2/2. It functions in the pathway purine metabolism; IMP biosynthesis via de novo pathway; N(1)-(5-phospho-D-ribosyl)glycinamide from 5-phospho-alpha-D-ribose 1-diphosphate: step 2/2. Functionally, catalyzes the second and fifth step in the 'de novo' purine biosynthesis pathway; contains phosphoribosylamine--glycine ligase (GARS) and phosphoribosylformylglycinamidine cyclo-ligase (AIRS) activities. The polypeptide is Bifunctional purine biosynthetic protein ADE5,7 (Saccharomyces cerevisiae (strain ATCC 204508 / S288c) (Baker's yeast)).